Consider the following 427-residue polypeptide: MATIEGIVAREILDSRGNPTVEVEVGLDDGTIARAAVPSGASTGAFEAVELRDGEKDRYLGKGVTQAVSNIEDKIVDELIGYEASEQRLIDQKMLDLDGTDNKSQLGANAILGVSLAVAKAAASAAELNLFRYLGGPNAHLLPVPMMNILNGGAHADSNVDIQEFMIAPIGAPTFREALRSGAEVYHALKSVLKKKDLATGLGDEGGFAPNLPTNAAALDLISEAVEKAGYRLGTDIVFALDVAATEFFENGTYTFEGVEKTAEEMSSYYTKLADAYPIVSIEDPLAEDDWSGWRTLTASVGDRIQIVGDDLFVTNPQRIARGIAENAANSVLVKVNQIGSLTETLDAVDLAHRAGFRCMMSHRSGETEDTTIADLAVATGCGQIKTGAPARSDRVAKYNQLLRIEEELADAARYAGSGAFPRYRSA.

Residue glutamine 163 coordinates (2R)-2-phosphoglycerate. Glutamate 205 functions as the Proton donor in the catalytic mechanism. Mg(2+) is bound by residues aspartate 242, glutamate 283, and aspartate 310. The (2R)-2-phosphoglycerate site is built by lysine 335, arginine 364, serine 365, and lysine 386. The active-site Proton acceptor is the lysine 335.

It belongs to the enolase family. Requires Mg(2+) as cofactor.

The protein localises to the cytoplasm. It localises to the secreted. Its subcellular location is the cell surface. It carries out the reaction (2R)-2-phosphoglycerate = phosphoenolpyruvate + H2O. The protein operates within carbohydrate degradation; glycolysis; pyruvate from D-glyceraldehyde 3-phosphate: step 4/5. Its function is as follows. Catalyzes the reversible conversion of 2-phosphoglycerate (2-PG) into phosphoenolpyruvate (PEP). It is essential for the degradation of carbohydrates via glycolysis. In Salinispora tropica (strain ATCC BAA-916 / DSM 44818 / JCM 13857 / NBRC 105044 / CNB-440), this protein is Enolase.